The chain runs to 484 residues: Glutamyl-tRNA(Gln) amidotransferase subunit A (484 aa).

Catalysis depends on charge relay system residues Lys-77 and Ser-152. Ser-176 functions as the Acyl-ester intermediate in the catalytic mechanism.

Belongs to the amidase family. GatA subfamily. Heterotrimer of A, B and C subunits.

The enzyme catalyses L-glutamyl-tRNA(Gln) + L-glutamine + ATP + H2O = L-glutaminyl-tRNA(Gln) + L-glutamate + ADP + phosphate + H(+). Its function is as follows. Allows the formation of correctly charged Gln-tRNA(Gln) through the transamidation of misacylated Glu-tRNA(Gln) in organisms which lack glutaminyl-tRNA synthetase. The reaction takes place in the presence of glutamine and ATP through an activated gamma-phospho-Glu-tRNA(Gln). In Lacticaseibacillus paracasei (strain ATCC 334 / BCRC 17002 / CCUG 31169 / CIP 107868 / KCTC 3260 / NRRL B-441) (Lactobacillus paracasei), this protein is Glutamyl-tRNA(Gln) amidotransferase subunit A.